The primary structure comprises 175 residues: Ribosome maturation factor RimM (175 aa).

Positions 100–174 (EDEYYWNDVI…VKHKIITVIW (75 aa)) constitute a PRC barrel domain.

The protein belongs to the RimM family. In terms of assembly, binds ribosomal protein uS19.

The protein localises to the cytoplasm. Its function is as follows. An accessory protein needed during the final step in the assembly of 30S ribosomal subunit, possibly for assembly of the head region. Essential for efficient processing of 16S rRNA. May be needed both before and after RbfA during the maturation of 16S rRNA. It has affinity for free ribosomal 30S subunits but not for 70S ribosomes. This Buchnera aphidicola subsp. Schizaphis graminum (strain Sg) protein is Ribosome maturation factor RimM.